Consider the following 1657-residue polypeptide: MHRGPSLLLILCALASRVLGPASGLVTEGRAGLDIVHPVRVDAGGSFLSYELWPRVLRKRDVSTTQASSAFYQLQYQGRELLFNLTTNPYLMAPGFVSEIRRHSTLGHAHIQTSVPTCHLLGDVQDPELEGGFAAISACDGLRGVFQLSNEDYFIEPLDGVSAQPGHAQPHVVYKHQGSRKQAQQGDSRPSGTCGMQVPPDLEQQREHWEQQQQKRRQQRSVSKEKWVETLVVADSKMVEYHGQPQVESYVLTIMNMVAGLFHDPSIGNPIHISIVRLIILEDEEKDLKITHHAEETLKNFCRWQKNINIKGDDHPQHHDTAILLTRKDLCASMNQPCETLGLSHVSGLCHPQLSCSVSEDTGMPLAFTVAHELGHSFGIQHDGTGNDCESIGKRPFIMSPQLLYDRGIPLTWSRCSREYITRFLDRGWGLCLDDRPSKDVIALPSVLPGVLYDVNHQCRLQYGSHSAYCEDMDDVCHTLWCSVGTTCHSKLDAAVDGTSCGKNKWCLKGECVPEGFQPEAVDGGWSGWSAWSDCSRSCGVGVRSSERQCTQPVPKNRGKYCVGERKRSQLCNLPACPPDRPSFRHTQCSQFDGMLYKGKLHKWVPVPNDDNPCELHCRPSNSSNTEKLRDAVVDGTPCYQSRISRDICLNGICKNVGCDFVIDSGAEEDRCGVCRGDGSTCQTVSRTFKETEGQGYVDIGLIPAGAREILIEEVAEAANFLALRSEDPDKYFLNGGWTIQWNGDYRVAGTTFTYARKGNWENLTSPGPTSEPVWIQLLFQEKNPGVHYQYTIQRDSHDQVRPPEFSWHYGPWSKCTVTCGTGVQRQSLYCMERQAGVVAEEYCNTLNRPDERQRKCSEEPCPPRWWAGEWQPCSRSCGPEGLSRRAVFCIRSMGLDEQRALELSACEHLPRPLAETPCNRHVICPSTWGVGNWSQCSVTCGAGIRQRSVLCINNTDVPCDEAERPITETFCFLQPCQYPMYIVDTGASGSGSSSPELFNEVDFIPNQLAPRPSPASSPKPVSISNAIDEEELDPPGPVFVDDFYYDYNFINFHEDLSYGSFEEPHPDLVDNGGWTAPPHIRPTESPSDTPVPTAGALGAEAEDIQGSWSPSPLLSEASYSPPGLEQTSINPLANFLTEEDTPMGAPELGFPSLPWPPASVDDMMTPVGPGNPDELLVKEDEQSPPSTPWSDRNKLSTDGNPLGHTSPALPQSPIPTQPSPPSISPTQASPSPDVVEVSTGWNAAWDPVLEADLKPGHGELPSTVEVASPPLLPMATVPGIWGRDSPLEPGTPTFSSPELSSQHLKTLTMPGTLLLTVPTDLRSPGPSGQPQTPNLEGTQSPGLLPTPARETQTNSSKDPEVQPLQPSLEEDGDPADPLPARNASWQVGNWSQCSTTCGLGAIWRLVSCSSGNDEDCTLASRPQPARHCHLRPCAAWRTGNWSKCSRNCGGGSSTRDVQCVDTRDLRPLRPFHCQPGPTKPPNRQLCGTQPCLPWYTSSWRECSEACGGGEQQRLVTCPEPGLCEESLRPNNSRPCNTHPCTQWVVGPWGQCSAPCGGGVQRRLVRCVNTQTGLAEEDSDLCSHEAWPESSRPCATEDCELVEPPRCERDRLSFNFCETLRLLGRCQLPTIRAQCCRSCPPLSRGVPSRGHQRVARR.

An N-terminal signal peptide occupies residues 1 to 20; that stretch reads MHRGPSLLLILCALASRVLG. The propeptide occupies 21-220; the sequence is PASGLVTEGR…QQQQKRRQQR (200 aa). Asparagine 84 carries N-linked (GlcNAc...) asparagine glycosylation. The disordered stretch occupies residues 165–221; it reads PGHAQPHVVYKHQGSRKQAQQGDSRPSGTCGMQVPPDLEQQREHWEQQQQKRRQQRS. Polar residues predominate over residues 180-191; it reads RKQAQQGDSRPS. The Cysteine switch motif lies at 192–199; sequence GTCGMQVP. Residue cysteine 194 coordinates Zn(2+). A Peptidase M12B domain is found at 226–437; sequence KWVETLVVAD…GWGLCLDDRP (212 aa). 11 cysteine pairs are disulfide-bonded: cysteine 302-cysteine 356, cysteine 331-cysteine 338, cysteine 350-cysteine 432, cysteine 389-cysteine 416, cysteine 459-cysteine 482, cysteine 470-cysteine 488, cysteine 477-cysteine 507, cysteine 501-cysteine 512, cysteine 535-cysteine 572, cysteine 539-cysteine 577, and cysteine 550-cysteine 562. Zn(2+) is bound at residue histidine 372. Glutamate 373 is an active-site residue. 2 residues coordinate Zn(2+): histidine 376 and histidine 382. The region spanning 447-522 is the Disintegrin domain; that stretch reads VLPGVLYDVN…VPEGFQPEAV (76 aa). The 56-residue stretch at 523–578 folds into the TSP type-1 1 domain; it reads DGGWSGWSAWSDCSRSCGVGVRSSERQCTQPVPKNRGKYCVGERKRSQLCNLPACP. Asparagine 622 carries N-linked (GlcNAc...) asparagine glycosylation. Positions 683-794 are spacer; the sequence is QTVSRTFKET…PGVHYQYTIQ (112 aa). TSP type-1 domains lie at 804–863, 864–923, and 925–978; these read PEFS…EPCP, PRWW…NRHV, and CPST…QPCQ. 5 disordered regions span residues 1009 to 1034, 1073 to 1127, 1140 to 1237, 1283 to 1304, and 1317 to 1384; these read LAPR…EELD, GGWT…GLEQ, EDTP…DVVE, GRDS…SSQH, and TVPT…ARNA. Over residues 1211-1224 the composition is skewed to pro residues; the sequence is PQSPIPTQPSPPSI. Composition is skewed to polar residues over residues 1293–1304 and 1327–1342; these read PTFSSPELSSQH and PSGQ…TQSP. TSP type-1 domains are found at residues 1366-1414, 1417-1477, 1479-1522, and 1524-1584; these read QPSL…SGND, CTLA…CQPG, TKPP…PEPG, and CEES…LCSH. The PLAC domain maps to 1587–1627; it reads WPESSRPCATEDCELVEPPRCERDRLSFNFCETLRLLGRCQ.

As to quaternary structure, interacts with COMP. Zn(2+) serves as cofactor. In terms of processing, N-glycosylated. Can be O-fucosylated by POFUT2 on a serine or a threonine residue found within the consensus sequence C1-X(2)-(S/T)-C2-G of the TSP type-1 repeat domains where C1 and C2 are the first and second cysteine residue of the repeat, respectively. Fucosylated repeats can then be further glycosylated by the addition of a beta-1,3-glucose residue by the glucosyltransferase, B3GALTL. Fucosylation mediates the efficient secretion of ADAMTS family members. Can also be C-glycosylated with one or two mannose molecules on tryptophan residues within the consensus sequence W-X-X-W of the TPRs. N- and C-glycosylations can also facilitate secretion. Post-translationally, O-glycosylated proteoglycan; contains chondroitin sulfate. May be cleaved by a furin endopeptidase. The precursor is sequentially processed.

Its subcellular location is the secreted. It is found in the extracellular space. The protein localises to the extracellular matrix. In terms of biological role, metalloprotease. Was previously shown to degrade COMP. However, a later study found no activity against COMP. The chain is A disintegrin and metalloproteinase with thrombospondin motifs 7 (Adamts7) from Mus musculus (Mouse).